A 3430-amino-acid polypeptide reads, in one-letter code: Genome polyprotein (3430 aa).

The segment at 2 to 15 (SKKPGGPGKNRAVN) is interaction with host EXOC1. Residues 2 to 105 (SKKPGGPGKN…NRRSTKQKKR (104 aa)) are Cytoplasmic-facing. The interval 37 to 72 (LIDGKGPIRFVLALLAFFRFTAIAPTRAVLDRWRGV) is hydrophobic; homodimerization of capsid protein C. A propeptide spans 106–123 (GGTAGFTILLGLIACAGA) (ER anchor for the capsid protein C, removed in mature form by serine protease NS3). Residues 106 to 126 (GGTAGFTILLGLIACAGAVTL) traverse the membrane as a helical segment. The Extracellular segment spans residues 127 to 248 (SNFQGKVMMT…KATRYLVKTE (122 aa)). An N-linked (GlcNAc...) asparagine; by host glycan is attached at Asn-138. The chain crosses the membrane as a helical span at residues 249-269 (SWILRNPGYALVAAVIGWMLG). Over 270–275 (SNTMQR) the chain is Cytoplasmic. A helical membrane pass occupies residues 276–290 (VVFAILLLLVAPAYS). Over 291–739 (FNCLGMSNRD…QVFGGAFRSL (449 aa)) the chain is Extracellular. Intrachain disulfides connect Cys-293/Cys-320, Cys-350/Cys-406, Cys-364/Cys-395, Cys-382/Cys-411, Cys-476/Cys-574, and Cys-591/Cys-622. Residues 388–401 (DRGWGNGCGLFGKG) are fusion peptide. Residues 740 to 760 (FGGMSWITQGLLGALLLWMGI) form a helical membrane-spanning segment. At 761–766 (NARDRS) the chain is on the cytoplasmic side. Residues 767-787 (IAMTFLAVGGVLLFLSVNVHA) form a helical membrane-spanning segment. Over 788–1212 (DTGCAIDIGR…AFAEANSGGD (425 aa)) the chain is Extracellular. 2 disulfides stabilise this stretch: Cys-791-Cys-802 and Cys-842-Cys-930. N-linked (GlcNAc...) asparagine; by host glycosylation is found at Asn-917, Asn-962, and Asn-994. Intrachain disulfides connect Cys-966/Cys-1010, Cys-1067/Cys-1116, Cys-1078/Cys-1099, and Cys-1100/Cys-1103. The helical transmembrane segment at 1213–1233 (VVHLALMATFKIQPVFLVASF) threads the bilayer. Over 1234 to 1243 (LKARWTNQES) the chain is Cytoplasmic. The chain crosses the membrane as a helical span at residues 1244–1264 (ILLMLAAAFFQMAYYDAKNVL). Residues 1265–1278 (SWEVPDVLNSLSVA) are Lumenal-facing. A helical transmembrane segment spans residues 1279 to 1299 (WMILRAISFTNTSNVVVPLLA). At 1300–1307 (LLTPGLKC) the chain is on the cytoplasmic side. A helical membrane pass occupies residues 1308–1328 (LNLDVYRILLLMVGVGSLIKE). Residues 1329–1340 (KRSSAAKKKGAC) are Lumenal-facing. The helical transmembrane segment at 1341–1361 (LICLALASTGVFNPMILAAGL) threads the bilayer. Over 1362–1371 (MACDPNRKRG) the chain is Cytoplasmic. The chain crosses the membrane as a helical span at residues 1372 to 1392 (WPATEVMTAVGLMFAIVGGLA). Residues 1393–1395 (ELD) are Lumenal-facing. A helical transmembrane segment spans residues 1396–1416 (IDSMAIPMTIAGLMFAAFVIS). Over 1417–1473 (GKSTDMWIERTADITWESDAEITGSSERVDVRLDDDGNFQLMNDPGAPWKIWMLRMA) the chain is Cytoplasmic. The interacts with and activates NS3 protease stretch occupies residues 1424–1463 (IERTADITWESDAEITGSSERVDVRLDDDGNFQLMNDPGA). The helical intramembrane region spans 1474 to 1494 (CLAISAYTPWAILPSVIGFWI). Residues 1495–2170 (TLQYTKRGGV…RMALEELPDA (676 aa)) are Cytoplasmic-facing. The region spanning 1502 to 1679 (GGVLWDTPSP…ERMEEPAPAG (178 aa)) is the Peptidase S7 domain. Catalysis depends on charge relay system; for serine protease NS3 activity residues His-1552, Asp-1576, and Ser-1636. The 157-residue stretch at 1682 to 1838 (PEMLRKKQIT…ESNAPISDMQ (157 aa)) folds into the Helicase ATP-binding domain. Residues 1686–1689 (RKKQ) form an important for RNA-binding region. An ATP-binding site is contributed by 1695–1702 (LHPGAGKT). Residues 1786–1789 (DEAH) carry the DEAH box motif. The Helicase C-terminal domain occupies 1849–2014 (GYEWITEYVG…GLVAQLYQPE (166 aa)). Lys-1890 carries the post-translational modification N6-acetyllysine; by host. Residues 2165-2169 (EELPD) form a regulates the ATPase activity of NS3 helicase region. The chain crosses the membrane as a helical span at residues 2171–2191 (LQTIVLIALLSVMSLGVFFLL). The Lumenal portion of the chain corresponds to 2192 to 2196 (MQRKG). An intramembrane region (helical) is located at residues 2197 to 2217 (IGKIGLGGVILGAATFFCWMA). Glu-2218 is a topological domain (lumenal). Residues 2219-2239 (VPGTKIAGMLLLSLLLMIVLI) form a helical membrane-spanning segment. Residues 2240–2254 (PEPEKQRSQTDNQLA) lie on the Cytoplasmic side of the membrane. The helical transmembrane segment at 2255–2275 (VFLICVLTLVGAVAANEMGWL) threads the bilayer. Residues 2276 to 2309 (DKTKNDIGSLLGHRPEARETTLGVESFLLDLRPA) lie on the Lumenal side of the membrane. Positions 2310–2330 (TAWSLYAVTTAVLTPLLKHLI) form an intramembrane region, helical. The Lumenal portion of the chain corresponds to 2331–2377 (TSDYINTSLTSINVQASALFTLARGFPFVDVGVSALLLAVGCWGQVT). Residues 2378 to 2398 (LTVTVTAAALLFCHYAYMVPG) form a helical membrane-spanning segment. The Cytoplasmic segment spans residues 2399 to 2441 (WQAEAMRSAQRRTAAGIMKNVVVDGIVATDVPELERTTPVMQK). A helical transmembrane segment spans residues 2442 to 2462 (KVGQIILILVSMAAVVVNPSV). Residues 2463 to 2467 (RTVRE) are Lumenal-facing. The helical transmembrane segment at 2468–2488 (AGILTTAAAVTLWENGASSVW) threads the bilayer. Residues 2489–3430 (NATTAIGLCH…DTIVVEDTVL (942 aa)) lie on the Cytoplasmic side of the membrane. Residues 2526–2791 (GGAKGRTLGE…DVNLGSGTRA (266 aa)) enclose the mRNA cap 0-1 NS5-type MT domain. Ser-2581 contributes to the S-adenosyl-L-methionine binding site. Residue Ser-2581 is modified to Phosphoserine. Lys-2586 serves as the catalytic For 2'-O-MTase activity. Residues Gly-2611, Trp-2612, Thr-2629, Lys-2630, Asp-2656, and Val-2657 each coordinate S-adenosyl-L-methionine. The active-site For 2'-O-MTase activity is the Asp-2671. Ile-2672 serves as a coordination point for S-adenosyl-L-methionine. Catalysis depends on for 2'-O-MTase activity residues Lys-2707 and Glu-2743. Residue Tyr-2745 coordinates S-adenosyl-L-methionine. Residues 2914 to 2916 (RDK) carry the Nuclear localization signal motif. Zn(2+)-binding residues include Glu-2965, His-2969, Cys-2974, and Cys-2977. Residues 3055–3207 (GKVYADDTAG…KPLDDRFATS (153 aa)) enclose the RdRp catalytic domain. His-3242, Cys-3258, and Cys-3377 together coordinate Zn(2+). Residues 3428–3430 (TVL) carry the PDZ-binding motif.

The protein in the N-terminal section; belongs to the class I-like SAM-binding methyltransferase superfamily. mRNA cap 0-1 NS5-type methyltransferase family. Homodimer. Interacts (via N-terminus) with host EXOC1 (via C-terminus); this interaction results in EXOC1 degradation through the proteasome degradation pathway. Interacts with host DDX56; this interaction plays an important role in genomic RNA encapsidation. In terms of assembly, forms heterodimers with envelope protein E in the endoplasmic reticulum and Golgi. As to quaternary structure, homodimer; in the endoplasmic reticulum and Golgi. Homodimer; Homohexamer when secreted. Interacts with envelope protein E. NS1 interacts with NS4B. Interacts with host complement protein CFH; this interaction leads to the degradation of C3. In terms of assembly, interacts (via N-terminus) with serine protease NS3. As to quaternary structure, forms a heterodimer with serine protease NS3. May form homooligomers. Forms a heterodimer with NS2B. Interacts with NS4B. Interacts with unphosphorylated RNA-directed RNA polymerase NS5; this interaction stimulates RNA-directed RNA polymerase NS5 guanylyltransferase activity. In terms of assembly, interacts with Serine protease/Helicase NS3. Interacts with NS1. As to quaternary structure, homodimer. Interacts with host STAT2; this interaction inhibits the phosphorylation of the latter, and, when all viral proteins are present (polyprotein), targets STAT2 for degradation. Interacts with host PAF1 complex. In terms of processing, specific enzymatic cleavages in vivo yield mature proteins. Cleavages in the lumen of endoplasmic reticulum are performed by host signal peptidase, whereas cleavages in the cytoplasmic side are performed by serine protease NS3. Signal cleavage at the 2K-4B site requires a prior NS3 protease-mediated cleavage at the 4A-2K site. Post-translationally, cleaved in post-Golgi vesicles by a host furin, releasing the mature small envelope protein M, and peptide pr. This cleavage is incomplete as up to 30% of viral particles still carry uncleaved prM. Not N-glycosylated. In terms of processing, N-glycosylated. The excreted form is glycosylated and this is required for efficient secretion of the protein from infected cells. Post-translationally, acetylated by host KAT5. Acetylation modulates NS3 RNA-binding and unwinding activities and plays an important positive role for viral replication. Phosphorylated on serines residues. This phosphorylation may trigger NS5 nuclear localization.

Its subcellular location is the virion. The protein resides in the host nucleus. It is found in the host cytoplasm. It localises to the host perinuclear region. The protein localises to the secreted. Its subcellular location is the virion membrane. The protein resides in the host endoplasmic reticulum membrane. It carries out the reaction Selective hydrolysis of -Xaa-Xaa-|-Yaa- bonds in which each of the Xaa can be either Arg or Lys and Yaa can be either Ser or Ala.. The catalysed reaction is RNA(n) + a ribonucleoside 5'-triphosphate = RNA(n+1) + diphosphate. It catalyses the reaction a ribonucleoside 5'-triphosphate + H2O = a ribonucleoside 5'-diphosphate + phosphate + H(+). The enzyme catalyses ATP + H2O = ADP + phosphate + H(+). It carries out the reaction a 5'-end (5'-triphosphoguanosine)-ribonucleoside in mRNA + S-adenosyl-L-methionine = a 5'-end (N(7)-methyl 5'-triphosphoguanosine)-ribonucleoside in mRNA + S-adenosyl-L-homocysteine. The catalysed reaction is a 5'-end (N(7)-methyl 5'-triphosphoguanosine)-ribonucleoside in mRNA + S-adenosyl-L-methionine = a 5'-end (N(7)-methyl 5'-triphosphoguanosine)-(2'-O-methyl-ribonucleoside) in mRNA + S-adenosyl-L-homocysteine + H(+). Functionally, plays a role in virus budding by binding to the cell membrane and gathering the viral RNA into a nucleocapsid that forms the core of a mature virus particle. During virus entry, may induce genome penetration into the host cytoplasm after hemifusion induced by the surface proteins. Can migrate to the cell nucleus where it modulates host functions. Overcomes the anti-viral effects of host EXOC1 by sequestering and degrading the latter through the proteasome degradation pathway. In terms of biological role, inhibits RNA silencing by interfering with host Dicer. Prevents premature fusion activity of envelope proteins in trans-Golgi by binding to envelope protein E at pH6.0. After virion release in extracellular space, gets dissociated from E dimers. Its function is as follows. Acts as a chaperone for envelope protein E during intracellular virion assembly by masking and inactivating envelope protein E fusion peptide. prM is the only viral peptide matured by host furin in the trans-Golgi network probably to avoid catastrophic activation of the viral fusion activity in acidic Golgi compartment prior to virion release. prM-E cleavage is inefficient, and many virions are only partially matured. These uncleaved prM would play a role in immune evasion. Functionally, may play a role in virus budding. Exerts cytotoxic effects by activating a mitochondrial apoptotic pathway through M ectodomain. May display a viroporin activity. In terms of biological role, binds to host cell surface receptor and mediates fusion between viral and cellular membranes. Envelope protein is synthesized in the endoplasmic reticulum in the form of heterodimer with protein prM. They play a role in virion budding in the ER, and the newly formed immature particle is covered with 60 spikes composed of heterodimer between precursor prM and envelope protein E. The virion is transported to the Golgi apparatus where the low pH causes dissociation of PrM-E heterodimers and formation of E homodimers. prM-E cleavage is inefficient, and many virions are only partially matured. These uncleaved prM would play a role in immune evasion. Involved in immune evasion, pathogenesis and viral replication. Once cleaved off the polyprotein, is targeted to three destinations: the viral replication cycle, the plasma membrane and the extracellular compartment. Essential for viral replication. Required for formation of the replication complex and recruitment of other non-structural proteins to the ER-derived membrane structures. Excreted as a hexameric lipoparticle that plays a role against host immune response. Antagonizing the complement function. Binds to the host macrophages and dendritic cells. Inhibits signal transduction originating from Toll-like receptor 3 (TLR3). Its function is as follows. Component of the viral RNA replication complex that functions in virion assembly and antagonizes the host alpha/beta interferon antiviral response. Functionally, required cofactor for the serine protease function of NS3. May have membrane-destabilizing activity and form viroporins. In terms of biological role, displays three enzymatic activities: serine protease, NTPase and RNA helicase. NS3 serine protease, in association with NS2B, performs its autocleavage and cleaves the polyprotein at dibasic sites in the cytoplasm: C-prM, NS2A-NS2B, NS2B-NS3, NS3-NS4A, NS4A-2K and NS4B-NS5. NS3 RNA helicase binds RNA and unwinds dsRNA in the 3' to 5' direction. NS3 supports the separation of RNA daughter and template strands during viral replication. The helicase part is involved in the inhibition of phosphorylation of host STAT1, and thereby inhibition of host type-I IFN signaling. In addition, NS3 assists the initiation of replication by unwinding the RNA secondary structure in the 3' non-translated region (NTR). Inhibits STAT2 translocation in the nucleus after IFN-alpha treatment. Regulates the ATPase activity of the NS3 helicase activity. NS4A allows NS3 helicase to conserve energy during unwinding. Its function is as follows. Functions as a signal peptide for NS4B and is required for the interferon antagonism activity of the latter. Functionally, induces the formation of ER-derived membrane vesicles where the viral replication takes place. Inhibits interferon (IFN)-induced host STAT1 phosphorylation and nuclear translocation, thereby preventing the establishment of cellular antiviral state by blocking the IFN-alpha/beta pathway. Inhibits STAT2 translocation in the nucleus after IFN-alpha treatment. In terms of biological role, replicates the viral (+) and (-) RNA genome, and performs the capping of genomes in the cytoplasm. NS5 methylates viral RNA cap at guanine N-7 and ribose 2'-O positions. Besides its role in RNA genome replication, also prevents the establishment of cellular antiviral state by blocking the interferon-alpha/beta (IFN-alpha/beta) signaling pathway. Inhibits host TYK2 and STAT2 phosphorylation, thereby preventing activation of JAK-STAT signaling pathway. This is Genome polyprotein from Aedes (Tropical bont tick).